Consider the following 144-residue polypeptide: UPF0179 protein PF1381 (144 aa).

It belongs to the UPF0179 family.

This Pyrococcus furiosus (strain ATCC 43587 / DSM 3638 / JCM 8422 / Vc1) protein is UPF0179 protein PF1381.